Here is a 158-residue protein sequence, read N- to C-terminus: Rhombotin-2 (158 aa).

LIM zinc-binding domains follow at residues C30–G89 and C94–K153.

In terms of assembly, interacts via its LIM domains with ELF2 and LDB1. Interacts with BEX2 and KDM5A. Also interacts with basic helix-loop-helix protein TAL1/SCL and can assemble in a complex with LMO2 and TAL1/SCL.

The protein resides in the nucleus. Functionally, acts with TAL1/SCL to regulate red blood cell development. Also acts with LDB1 to maintain erythroid precursors in an immature state. The sequence is that of Rhombotin-2 (LMO2) from Bos taurus (Bovine).